Reading from the N-terminus, the 428-residue chain is 5'-deoxyadenosine deaminase (428 aa).

Positions 59 and 61 each coordinate Zn(2+). Residues glutamate 88 and histidine 180 each coordinate substrate. Histidine 207 is a Zn(2+) binding site. Positions 210 and 296 each coordinate substrate. Aspartate 296 lines the Zn(2+) pocket.

Belongs to the metallo-dependent hydrolases superfamily. MTA/SAH deaminase family. In terms of assembly, homotetramer. Zn(2+) serves as cofactor.

The catalysed reaction is 5'-deoxyadenosine + H2O + H(+) = 5'-deoxyinosine + NH4(+). The enzyme catalyses S-adenosyl-L-homocysteine + H2O + H(+) = S-inosyl-L-homocysteine + NH4(+). It catalyses the reaction S-methyl-5'-thioadenosine + H2O + H(+) = S-methyl-5'-thioinosine + NH4(+). It carries out the reaction adenosine + H2O + H(+) = inosine + NH4(+). Its pathway is amino-acid biosynthesis; S-adenosyl-L-methionine biosynthesis. Functionally, catalyzes the deamination of three SAM-derived enzymatic products, namely 5'-deoxyadenosine, S-adenosyl-L-homocysteine, and 5'-methylthioadenosine, to produce the inosine analogs. Can also deaminate adenosine. The preferred substrate for this enzyme is 5'-deoxyadenosine, but all these substrates are efficiently deaminated. Likely functions in a S-adenosyl-L-methionine (SAM) recycling pathway from S-adenosyl-L-homocysteine (SAH) produced from SAM-dependent methylation reactions. May also be involved in the recycling of 5'-deoxyadenosine, whereupon the 5'-deoxyribose moiety of 5'-deoxyinosine is further metabolized to deoxyhexoses used for the biosynthesis of aromatic amino acids in methanogens. In Methanococcus aeolicus (strain ATCC BAA-1280 / DSM 17508 / OCM 812 / Nankai-3), this protein is 5'-deoxyadenosine deaminase.